The following is a 745-amino-acid chain: Protein transport protein SEC23 D (745 aa).

Zn(2+) is bound by residues Cys53, Cys56, Cys73, and Cys76. The tract at residues 53–76 (CENCYAYFNTYCELDQWAWNCSLC) is zinc finger-like.

This sequence belongs to the SEC23/SEC24 family. SEC24 subfamily. As to quaternary structure, component of the coat protein complex II (COPII), composed of at least five proteins: the Sec23/24 complex, the Sec13/31 complex and Sar1. In terms of tissue distribution, mostly expressed in closed floral bud, pollen and flowers, and, to a lower extent, in mature siliques, roots and leaf primordia.

Its subcellular location is the cytoplasmic vesicle. The protein resides in the COPII-coated vesicle membrane. It localises to the endoplasmic reticulum membrane. The protein localises to the membrane. Functionally, component of the coat protein complex II (COPII) which promotes the formation of transport vesicles from the endoplasmic reticulum (ER). The coat has two main functions, the physical deformation of the endoplasmic reticulum membrane into vesicles and the selection of cargo molecules. May contribute to COPII-coated vesicles formation and ER-Golgi vesicle transport. Together with SEC23A, essential for pollen wall development and exine patterning, probably by regulating endoplasmic reticulum (ER) export of lipids and proteins (e.g. sporopollenin) necessary for pollen wall formation. Also involved in plastid physiology in anther tapetal cells. The polypeptide is Protein transport protein SEC23 D (Arabidopsis thaliana (Mouse-ear cress)).